We begin with the raw amino-acid sequence, 262 residues long: Troponin T, slow skeletal muscle (262 aa).

Positions 1-31 are enriched in acidic residues; that stretch reads MSDAEEQEYEEEQPEEEEAAEEEEAPEEPEP. 3 disordered regions span residues 1-59, 107-153, and 165-197; these read MSDA…PEGE, RAER…KKKV, and LVKA…NIDH. The residue at position 2 (S2) is a Phosphoserine; by CK2. The span at 32–41 shows a compositional bias: basic and acidic residues; sequence VAEREEERPK. Residues 43-55 show a composition bias toward pro residues; sequence SRPVVPPLIPPKI. 2 stretches are compositionally biased toward basic and acidic residues: residues 107–149 and 177–197; these read RAER…DDAK and TGRE…NIDH.

It belongs to the troponin T family. Interacts with TPM3.

In terms of biological role, troponin T is the tropomyosin-binding subunit of troponin, the thin filament regulatory complex which confers calcium-sensitivity to striated muscle actomyosin ATPase activity. The polypeptide is Troponin T, slow skeletal muscle (TNNT1) (Sus scrofa (Pig)).